The sequence spans 125 residues: Small ribosomal subunit protein uS13 (125 aa).

Residues 95–125 form a disordered region; it reads GLPVNGQRTRTNARTRKGGKKTVANKKKVTK. A compositionally biased stretch (basic residues) spans 105–125; that stretch reads TNARTRKGGKKTVANKKKVTK.

The protein belongs to the universal ribosomal protein uS13 family. In terms of assembly, part of the 30S ribosomal subunit. Forms a loose heterodimer with protein S19. Forms two bridges to the 50S subunit in the 70S ribosome.

Its function is as follows. Located at the top of the head of the 30S subunit, it contacts several helices of the 16S rRNA. In the 70S ribosome it contacts the 23S rRNA (bridge B1a) and protein L5 of the 50S subunit (bridge B1b), connecting the 2 subunits; these bridges are implicated in subunit movement. Contacts the tRNAs in the A and P-sites. In Leptospira interrogans serogroup Icterohaemorrhagiae serovar copenhageni (strain Fiocruz L1-130), this protein is Small ribosomal subunit protein uS13.